A 1257-amino-acid chain; its full sequence is Pesticidal crystal protein Cry12Aa (1257 aa).

Belongs to the delta endotoxin family.

In terms of biological role, endotoxin with nematicidal activity. This chain is Pesticidal crystal protein Cry12Aa (cry12Aa), found in Bacillus thuringiensis.